The chain runs to 253 residues: Isoprenyl transferase (253 aa).

Asp32 is a catalytic residue. Asp32 serves as a coordination point for Mg(2+). Substrate is bound by residues 33-36, Trp37, Arg45, His49, and 77-79; these read GNGR and STE. Asn80 serves as the catalytic Proton acceptor. Residues Trp81, Arg83, Arg200, and 206–208 each bind substrate; that span reads RLS. A Mg(2+)-binding site is contributed by Glu219.

The protein belongs to the UPP synthase family. Homodimer. Mg(2+) is required as a cofactor.

In terms of biological role, catalyzes the condensation of isopentenyl diphosphate (IPP) with allylic pyrophosphates generating different type of terpenoids. In Clostridium perfringens (strain 13 / Type A), this protein is Isoprenyl transferase.